The chain runs to 491 residues: Probable glycine dehydrogenase (decarboxylating) subunit 2 (491 aa).

K273 is subject to N6-(pyridoxal phosphate)lysine.

Belongs to the GcvP family. C-terminal subunit subfamily. In terms of assembly, the glycine cleavage system is composed of four proteins: P, T, L and H. In this organism, the P 'protein' is a heterodimer of two subunits. The cofactor is pyridoxal 5'-phosphate.

It carries out the reaction N(6)-[(R)-lipoyl]-L-lysyl-[glycine-cleavage complex H protein] + glycine + H(+) = N(6)-[(R)-S(8)-aminomethyldihydrolipoyl]-L-lysyl-[glycine-cleavage complex H protein] + CO2. Its function is as follows. The glycine cleavage system catalyzes the degradation of glycine. The P protein binds the alpha-amino group of glycine through its pyridoxal phosphate cofactor; CO(2) is released and the remaining methylamine moiety is then transferred to the lipoamide cofactor of the H protein. The sequence is that of Probable glycine dehydrogenase (decarboxylating) subunit 2 from Bacillus anthracis (strain A0248).